The sequence spans 1365 residues: DNA-directed RNA polymerase subunit beta' (1365 aa).

4 residues coordinate Zn(2+): Cys-249, Cys-316, Cys-323, and Cys-326.

This sequence belongs to the RNA polymerase beta' chain family. RpoC2 subfamily. In terms of assembly, in cyanobacteria the RNAP catalytic core is composed of 2 alpha, 1 beta, 1 beta', 1 gamma and 1 omega subunit. When a sigma factor is associated with the core the holoenzyme is formed, which can initiate transcription. It depends on Zn(2+) as a cofactor.

The catalysed reaction is RNA(n) + a ribonucleoside 5'-triphosphate = RNA(n+1) + diphosphate. In terms of biological role, DNA-dependent RNA polymerase catalyzes the transcription of DNA into RNA using the four ribonucleoside triphosphates as substrates. The protein is DNA-directed RNA polymerase subunit beta' of Synechococcus sp. (strain CC9311).